The primary structure comprises 160 residues: Protein cornichon homolog 3 (160 aa).

The Cytoplasmic portion of the chain corresponds to Met-1–Tyr-10. A helical transmembrane segment spans residues Met-11–Phe-31. Over Asp-32–Tyr-72 the chain is Lumenal. A helical membrane pass occupies residues Ser-73 to Leu-93. The Cytoplasmic segment spans residues Asn-94–Lys-138. A helical membrane pass occupies residues Leu-139–Ser-159. Residue Ser-160 is a topological domain, lumenal.

This sequence belongs to the cornichon family. In terms of assembly, acts as an auxiliary subunit for AMPA-selective glutamate receptors (AMPARs). Found in a complex with GRIA1, GRIA2, GRIA3, GRIA4, CNIH2, CACNG2, CACNG3, CACNG4, CACNG5, CACNG7 and CACNG8. Brain. Expressed in the neocortex, hippocampal formation, and cerebellum (at protein level).

It localises to the postsynaptic cell membrane. Functionally, regulates the trafficking and gating properties of AMPA-selective glutamate receptors (AMPARs). Promotes their targeting to the cell membrane and synapses and modulates their gating properties by regulating their rates of activation, deactivation and desensitization. The sequence is that of Protein cornichon homolog 3 (Cnih3) from Rattus norvegicus (Rat).